Here is a 306-residue protein sequence, read N- to C-terminus: Shugoshin (306 aa).

Residues 28-75 (NFKSTNESLIKKNLQLKQQLSQCTKALEKLRNENIALREQNQELIDAT) are a coiled coil. Disordered stretches follow at residues 122 to 196 (PEPS…GRRS) and 223 to 306 (IAPS…DTFF). The segment covering 133-161 (PKMECNLEKLDESPVRNFPRSDYEEENKS) has biased composition (basic and acidic residues). Residues 167-181 (NGPSSSSSMTQNLEN) are compositionally biased toward polar residues. Over residues 230–241 (GGPPKKAPPRKA) the composition is skewed to pro residues.

Belongs to the shugoshin family.

It localises to the nucleus. The protein resides in the chromosome. The protein localises to the centromere. Its function is as follows. Plays a central role in chromosome cohesion during cell division by preventing premature dissociation of cohesin complex from centromeres after prophase, when most of cohesin complex dissociates from chromosomes arms. The polypeptide is Shugoshin (sgo-1) (Caenorhabditis briggsae).